Here is a 295-residue protein sequence, read N- to C-terminus: Beta-chimaerin (295 aa).

A Phorbol-ester/DAG-type zinc finger spans residues 41-91 (THNFKVHTFRGPHWCEYCANFMWGLIAQGVRCSDCGLNVHKQCSKHVPNDC). The Rho-GAP domain maps to 104–295 (CDLTTLVKAH…ILIENEDVLF (192 aa)).

In terms of tissue distribution, found in cerebellum and testis.

It is found in the membrane. Its activity is regulated as follows. In the inactive state, the N terminus protrudes into the active site of the Rho-GAP domain, sterically blocking Rac binding. Phospholipid binding to the Phorbol-ester/DAG-type zinc-finger/C1 domain triggers the cooperative dissociation of these interactions, allowing the N-terminus to move out of the active site and thereby activating the enzyme. GTPase-activating protein for p21-rac. This Rattus norvegicus (Rat) protein is Beta-chimaerin (Chn2).